The chain runs to 477 residues: Glycogen synthase (477 aa).

Position 15 (Lys15) interacts with ADP-alpha-D-glucose.

Belongs to the glycosyltransferase 1 family. Bacterial/plant glycogen synthase subfamily.

It catalyses the reaction [(1-&gt;4)-alpha-D-glucosyl](n) + ADP-alpha-D-glucose = [(1-&gt;4)-alpha-D-glucosyl](n+1) + ADP + H(+). It participates in glycan biosynthesis; glycogen biosynthesis. In terms of biological role, synthesizes alpha-1,4-glucan chains using ADP-glucose. This is Glycogen synthase from Streptococcus pneumoniae serotype 2 (strain D39 / NCTC 7466).